The following is a 141-amino-acid chain: Albumin-8 (141 aa).

Positions 1-25 are cleaved as a signal peptide; that stretch reads MARFSIVFAAAGVLLLVAMAPVSEA. A propeptide spanning residues 26–38 is cleaved from the precursor; it reads STTTIITTIIEEN. 4 disulfides stabilise this stretch: Cys-49/Cys-100, Cys-62/Cys-89, Cys-90/Cys-132, and Cys-102/Cys-139.

Belongs to the 2S seed storage albumins family. Heterodimer; disulfide-linked.

Functionally, this is a 2S seed storage protein. In Helianthus annuus (Common sunflower), this protein is Albumin-8.